The chain runs to 252 residues: Imidazole glycerol phosphate synthase subunit HisF (252 aa).

Active-site residues include D11 and D130.

It belongs to the HisA/HisF family. As to quaternary structure, heterodimer of HisH and HisF.

The protein localises to the cytoplasm. It catalyses the reaction 5-[(5-phospho-1-deoxy-D-ribulos-1-ylimino)methylamino]-1-(5-phospho-beta-D-ribosyl)imidazole-4-carboxamide + L-glutamine = D-erythro-1-(imidazol-4-yl)glycerol 3-phosphate + 5-amino-1-(5-phospho-beta-D-ribosyl)imidazole-4-carboxamide + L-glutamate + H(+). Its pathway is amino-acid biosynthesis; L-histidine biosynthesis; L-histidine from 5-phospho-alpha-D-ribose 1-diphosphate: step 5/9. In terms of biological role, IGPS catalyzes the conversion of PRFAR and glutamine to IGP, AICAR and glutamate. The HisF subunit catalyzes the cyclization activity that produces IGP and AICAR from PRFAR using the ammonia provided by the HisH subunit. In Staphylococcus aureus (strain MRSA252), this protein is Imidazole glycerol phosphate synthase subunit HisF.